Reading from the N-terminus, the 333-residue chain is Phosphate acyltransferase (333 aa).

Belongs to the PlsX family. As to quaternary structure, homodimer. Probably interacts with PlsY.

Its subcellular location is the cytoplasm. The catalysed reaction is a fatty acyl-[ACP] + phosphate = an acyl phosphate + holo-[ACP]. The protein operates within lipid metabolism; phospholipid metabolism. Catalyzes the reversible formation of acyl-phosphate (acyl-PO(4)) from acyl-[acyl-carrier-protein] (acyl-ACP). This enzyme utilizes acyl-ACP as fatty acyl donor, but not acyl-CoA. The sequence is that of Phosphate acyltransferase from Lactobacillus acidophilus (strain ATCC 700396 / NCK56 / N2 / NCFM).